A 346-amino-acid chain; its full sequence is tRNA N6-adenosine threonylcarbamoyltransferase (346 aa).

Positions 111 and 115 each coordinate Fe cation. Substrate-binding positions include 134–138 (LVSGG), Asp167, Gly180, and Asn279. Asp307 provides a ligand contact to Fe cation.

Belongs to the KAE1 / TsaD family. It depends on Fe(2+) as a cofactor.

It is found in the cytoplasm. The catalysed reaction is L-threonylcarbamoyladenylate + adenosine(37) in tRNA = N(6)-L-threonylcarbamoyladenosine(37) in tRNA + AMP + H(+). Required for the formation of a threonylcarbamoyl group on adenosine at position 37 (t(6)A37) in tRNAs that read codons beginning with adenine. Is involved in the transfer of the threonylcarbamoyl moiety of threonylcarbamoyl-AMP (TC-AMP) to the N6 group of A37, together with TsaE and TsaB. TsaD likely plays a direct catalytic role in this reaction. The chain is tRNA N6-adenosine threonylcarbamoyltransferase from Burkholderia cenocepacia (strain ATCC BAA-245 / DSM 16553 / LMG 16656 / NCTC 13227 / J2315 / CF5610) (Burkholderia cepacia (strain J2315)).